We begin with the raw amino-acid sequence, 273 residues long: Shikimate dehydrogenase (NADP(+)) (273 aa).

Shikimate contacts are provided by residues 15–17 (SLS) and threonine 62. Catalysis depends on lysine 66, which acts as the Proton acceptor. Residue glutamate 78 coordinates NADP(+). Shikimate contacts are provided by asparagine 87 and aspartate 102. NADP(+)-binding positions include 126 to 130 (GAGGA), 150 to 155 (NRTIEK), and isoleucine 217. Tyrosine 219 is a binding site for shikimate. Glycine 240 contributes to the NADP(+) binding site.

It belongs to the shikimate dehydrogenase family. As to quaternary structure, homodimer.

It carries out the reaction shikimate + NADP(+) = 3-dehydroshikimate + NADPH + H(+). It functions in the pathway metabolic intermediate biosynthesis; chorismate biosynthesis; chorismate from D-erythrose 4-phosphate and phosphoenolpyruvate: step 4/7. In terms of biological role, involved in the biosynthesis of the chorismate, which leads to the biosynthesis of aromatic amino acids. Catalyzes the reversible NADPH linked reduction of 3-dehydroshikimate (DHSA) to yield shikimate (SA). The protein is Shikimate dehydrogenase (NADP(+)) of Nitrosopumilus maritimus (strain SCM1).